The chain runs to 201 residues: Probable cobalt-precorrin-6B C(15)-methyltransferase (decarboxylating) (201 aa).

S-adenosyl-L-methionine contacts are provided by residues Thr28, Gly52 to Gly56, Asp76, and Ala105.

The protein belongs to the methyltransferase superfamily. Archaeal-type CbiT family.

The enzyme catalyses Co-precorrin-6B + S-adenosyl-L-methionine = Co-precorrin-7 + S-adenosyl-L-homocysteine + CO2. It participates in cofactor biosynthesis; adenosylcobalamin biosynthesis; cob(II)yrinate a,c-diamide from sirohydrochlorin (anaerobic route): step 8/10. Catalyzes the methylation of C-15 in cobalt-precorrin-6B followed by the decarboxylation of C-12 to form cobalt-precorrin-7. This Thermoplasma volcanium (strain ATCC 51530 / DSM 4299 / JCM 9571 / NBRC 15438 / GSS1) protein is Probable cobalt-precorrin-6B C(15)-methyltransferase (decarboxylating).